We begin with the raw amino-acid sequence, 230 residues long: MTARDRLIVGLDVPNLQEAEKVVSALGDDILYYKIGYQLAFAGGLEFARDLAKDGKKIFLDMKLLDIDNTVASGVENIVKMGMSMLTLHAYPKAMKAAVAAAKGSDLCLLGVTVLTSMDEEDLIAAGYEYDPHTLVLRRAEQALLAGMGGIVCSAEEASAVRKIIGPDMALVTPGIRPAGSDKGDQKRVMTPAEGIRAGSSHLVVARPIVKAADPREAARAILAEMDAAL.

Substrate is bound by residues Asp-12, Lys-34, Asp-61–Thr-70, Thr-116, Arg-177, Gln-186, and Arg-207. Catalysis depends on Lys-63, which acts as the Proton donor.

The protein belongs to the OMP decarboxylase family. Type 1 subfamily. As to quaternary structure, homodimer.

The enzyme catalyses orotidine 5'-phosphate + H(+) = UMP + CO2. The protein operates within pyrimidine metabolism; UMP biosynthesis via de novo pathway; UMP from orotate: step 2/2. Catalyzes the decarboxylation of orotidine 5'-monophosphate (OMP) to uridine 5'-monophosphate (UMP). The protein is Orotidine 5'-phosphate decarboxylase of Rhizobium rhizogenes (strain K84 / ATCC BAA-868) (Agrobacterium radiobacter).